Reading from the N-terminus, the 557-residue chain is MFS-type transporter clz4 (557 aa).

Transmembrane regions (helical) follow at residues 22–42 (LIIVILTLGVVLFVINIDHNG), 59–79 (SITWAGSSQLIATTVFSVLYG), 89–109 (ALFVSALWVFSIAELGCGFAT), 120–140 (LTGASGGGIGNLSIIIATDVV), 150–170 (AVVAPFMVLGNICGPLVAAGV), 179–199 (GLFWLISPLGVLSAVLAGYIL), 217–237 (WLGSFTSTIAIVGFMVAVSGP), 245–265 (SLLVISLLSVSGVAFLAFLFI), 269–289 (LATLPVIPLTIFAIPDVSALL), 319–339 (VISGVLLFPIIAVQVVVSMIA), 346–366 (SGQYGLTIRLGVALLLIGSLL), 379–399 (VIIVLLVIGIGVGAANQPMVI), 419–439 (FFRFLGSACGVVMSAAILQST), and 479–499 (HVYIASAAASVLCSLGLFVWK). The span at 505-523 (SRPTENNDDIEHAPARGIE) shows a compositional bias: basic and acidic residues. Positions 505–557 (SRPTENNDDIEHAPARGIEREDEQSSLIYDREPSAVSYGTVEAGEPNRLRRGG) are disordered.

It belongs to the major facilitator superfamily. TCR/Tet family.

It is found in the membrane. MFS-type transporter; part of the gene cluster that mediates the biosynthesis of squalestatin S1 (SQS1, also known as zaragozic acid A), a heavily oxidized fungal polyketide that offers potent cholesterol lowering activity by targeting squalene synthase (SS). The chain is MFS-type transporter clz4 from Cochliobolus lunatus (Filamentous fungus).